Here is a 229-residue protein sequence, read N- to C-terminus: Demethylmenaquinone methyltransferase (229 aa).

Residues threonine 62, aspartate 80, 100–101 (DG), and serine 117 contribute to the S-adenosyl-L-methionine site.

The protein belongs to the class I-like SAM-binding methyltransferase superfamily. MenG/UbiE family.

It catalyses the reaction a 2-demethylmenaquinol + S-adenosyl-L-methionine = a menaquinol + S-adenosyl-L-homocysteine + H(+). It participates in quinol/quinone metabolism; menaquinone biosynthesis; menaquinol from 1,4-dihydroxy-2-naphthoate: step 2/2. Its function is as follows. Methyltransferase required for the conversion of demethylmenaquinol (DMKH2) to menaquinol (MKH2). In Corynebacterium kroppenstedtii (strain DSM 44385 / JCM 11950 / CIP 105744 / CCUG 35717), this protein is Demethylmenaquinone methyltransferase.